We begin with the raw amino-acid sequence, 365 residues long: Homeobox protein Nkx-6.1 (365 aa).

The disordered stretch occupies residues 35 to 136; the sequence is LYPAAYPPLP…SSSSASATSA (102 aa). Low complexity-rich tracts occupy residues 48-59, 69-92, and 110-136; these read PSSSSSSSSSSS, PGGLKPPAAGGLSSLGSPPQQLSA, and ASGAALPSASPSGSSSSSSSSASATSA. Residues 102-269 form a repressor domain region; sequence LSRPSMPVAS…KYLAGPERAR (168 aa). Arg-190 is subject to Asymmetric dimethylarginine. Positions 237-296 form a DNA-binding region, homeobox; that stretch reads RKHTRPTFSGQQIFALEKTFEQTKYLAGPERARLAYSLGMTESQVKVWFQNRRTKWRKKH. Residues 295 to 365 form a disordered region; the sequence is KHAAEMATAK…LHASEAEGSS (71 aa). Residues 305–318 show a composition bias toward basic and acidic residues; sequence KKQDSETERLKGTS. Residues 307–365 form an involved in DNA-binding region; that stretch reads QDSETERLKGTSENEEDDDDYNKPLDPNSDDEKITQLLKKHKSSGGSLLLHASEAEGSS.

Pancreatic beta cells.

The protein resides in the nucleus. Its function is as follows. Transcription factor which binds to specific A/T-rich DNA sequences in the promoter regions of a number of genes. Involved in the development of insulin-producing beta cells in the islets of Langerhans at the secondary transition. Together with NKX2-2 and IRX3 acts to restrict the generation of motor neurons to the appropriate region of the neural tube. Belongs to the class II proteins of neuronal progenitor factors, which are induced by SHH signals. In Rattus norvegicus (Rat), this protein is Homeobox protein Nkx-6.1 (Nkx6-1).